Reading from the N-terminus, the 102-residue chain is Transcription factor UPBEAT1 (102 aa).

A bHLH domain is found at isoleucine 32–leucine 82.

Homodimer. As to expression, expressed in the root vascular tissue and in root hairs and lateral root caps. Detected at the protein level in all cell files in the elongation zone.

It localises to the nucleus. Functionally, transcription factor that modulates the balance between cellular proliferation and differentiation in root growth. Does not act through cytokinin and auxin signaling, but by repressing peroxidase expression in the elongation zone. In Arabidopsis thaliana (Mouse-ear cress), this protein is Transcription factor UPBEAT1 (UPB1).